The chain runs to 167 residues: MRTLMIEPLTKEAFAPFGDVIETDGSDHFMINNGSTMRFHKLATVETAEPEDKAIISIFRADALEMPLTVRMLERHPLGSQAFIPLLGNPFLIVVAPVGDAPVSGLVRAFRSNGRQGVNYHRGVWHHPVLTIEKRDDFLVVDRSGSGNNCDEHYFPEEQMLILNPHQ.

This sequence belongs to the ureidoglycolate lyase family. As to quaternary structure, homodimer. Ni(2+) serves as cofactor.

The enzyme catalyses (S)-ureidoglycolate = urea + glyoxylate. It functions in the pathway nitrogen metabolism; (S)-allantoin degradation. In terms of biological role, catalyzes the catabolism of the allantoin degradation intermediate (S)-ureidoglycolate, generating urea and glyoxylate. Involved in the utilization of allantoin as nitrogen source. The sequence is that of Ureidoglycolate lyase from Pseudomonas entomophila (strain L48).